We begin with the raw amino-acid sequence, 308 residues long: Mitoferrin (308 aa).

The next 6 membrane-spanning stretches (helical) occupy residues 13–29 (GGSF…AGFA), 69–89 (ITGL…SHAV), 111–131 (IKVG…ASPM), 168–184 (YTTT…VYFA), 213–233 (LVAG…FDVV), and 285–302 (MVFH…YEYF). 3 Solcar repeats span residues 14–100 (GSFY…LKFK), 108–192 (HHPI…LKKI), and 207–305 (YQLI…FKFI).

The protein belongs to the mitochondrial carrier (TC 2.A.29) family.

The protein resides in the mitochondrion inner membrane. Its function is as follows. Mitochondrial solute carriers shuttle metabolites, nucleotides, and cofactors through the mitochondrial inner membrane. Mitochondrial iron transporter that mediates iron uptake. Probably required for heme synthesis of hemoproteins and Fe-S cluster assembly. The sequence is that of Mitoferrin (mcfF) from Dictyostelium discoideum (Social amoeba).